The sequence spans 189 residues: UPF0301 protein RPR_01165 (189 aa).

It belongs to the UPF0301 (AlgH) family.

The sequence is that of UPF0301 protein RPR_01165 from Rickettsia peacockii (strain Rustic).